The primary structure comprises 274 residues: Protein RecA (274 aa).

Residue 43–50 participates in ATP binding; that stretch reads GPESSGKT.

Belongs to the RecA family.

The protein resides in the cytoplasm. Its function is as follows. Can catalyze the hydrolysis of ATP in the presence of single-stranded DNA, the ATP-dependent uptake of single-stranded DNA by duplex DNA, and the ATP-dependent hybridization of homologous single-stranded DNAs. It interacts with LexA causing its activation and leading to its autocatalytic cleavage. This Neisseria mucosa protein is Protein RecA.